The following is a 557-amino-acid chain: CCR4-NOT transcription complex subunit 6 (557 aa).

LRR repeat units follow at residues 52–73, 75–96, 98–120, and 121–143; these read HLTALHLSDNSLSRIPSDIAKL, NLVYLDLSSNKIRSLPAELGNM, SLRELHLNNNLLRVLPFELGKLF, and QLQTLGLKGNPLTQDILNLYQEP. The tract at residues 153–557 is nuclease domain; the sequence is LLDNLSGTAK…VNGIHLPGRR (405 aa). Glutamate 240 is a binding site for Mg(2+). Substrate is bound by residues glutamate 240, glutamate 276, histidine 361, and proline 366. Aspartate 412 contributes to the Mg(2+) binding site. Aspartate 412 (proton donor/acceptor) is an active-site residue. 3 residues coordinate substrate: asparagine 414, asparagine 481, and phenylalanine 486.

The protein belongs to the CCR4/nocturin family. In terms of assembly, component of the CCR4-NOT complex; distinct complexes seem to exist that differ in the participation of probably mutually exclusive catalytic subunits; the complex contains two deadenylase subunits, CNOT6 or CNOT6L, and CNOT7 or CNOT8. Interacts with CNOT7 and CNOT8. Interacts with UNR. Interacts with ZFP36L1 (via N-terminus). Interacts with ZNF335. It depends on Mg(2+) as a cofactor.

Its subcellular location is the cytoplasm. It is found in the nucleus. The enzyme catalyses Exonucleolytic cleavage of poly(A) to 5'-AMP.. Its function is as follows. Poly(A) nuclease with 3'-5' RNase activity. Catalytic component of the CCR4-NOT complex which is one of the major cellular mRNA deadenylases and is linked to various cellular processes including bulk mRNA degradation, miRNA-mediated repression, translational repression during translational initiation and general transcription regulation. Additional complex functions may be a consequence of its influence on mRNA expression. Involved in mRNA decay mediated by the major-protein-coding determinant of instability (mCRD) of the FOS gene in the cytoplasm. In the presence of ZNF335, enhances ligand-dependent transcriptional activity of nuclear hormone receptors, including RARA. The increase of ligand-dependent ESR1-mediated transcription is much smaller, if any. Mediates cell proliferation and cell survival and prevents cellular senescence. This is CCR4-NOT transcription complex subunit 6 (CNOT6) from Homo sapiens (Human).